The following is a 402-amino-acid chain: MASYKNIPSTAKGSPISFDFSFPQPKLDHLRQVLELHPLGREAPSKTLRGSSKPQWFGNAKEIMRRFDWAAEEELLKAFPHYVVGVEDTIGGQMLQVHFVALFSTSPDAIPVLLIHSWFSSYVEYLCLLSVFTERFPQACDLPFHVIVPSLPGYDFSSPLSRETNNAQINEDNARVLNQLMVNLGFGAGSGGIGGYVVHGGVSSLRMCYTLAKEYKDCRALHANLDGAYRHTLTSSGGDEFEAVKSVLAELHPPEDWDSHERDMIRLAISTSPVSLLALIGSQFFGEQEQGAALRMVALIVAHHWMTDTYPDASQESYCIKDMSAEDLSHVLKHTGLEPNKPVGISFFSHGQGSASDIRPIVDGSSWSSRHEGNPFVAVLDQPNQTVGDLLGFVRQVQKQHS.

The protein belongs to the peptidase S33 family.

The protein operates within mycotoxin biosynthesis. Functionally, putative epoxide hydrolase; part of the gene clusters that mediate the biosynthesis of the host-selective toxins (HSTs) AF-toxins responsible for Alternaria black spot of strawberry disease by the strawberry pathotype. AF-toxin I and III are valine derivatives of 2,3-dyhydroxy-isovaleric acid and 2-hydroxy-isovaleric acid respectively, while AF II is an isoleucine derivative of 2-hydroxy-valeric acid. These derivatives are bound to a 9,10-epoxy-8-hydroxy-9-methyl-decatrienoic acid (EDA) moiety. On cellular level, AF-toxins affect plasma membrane of susceptible cells and cause a sudden increase in loss of K(+) after a few minutes of toxin treatment. The aldo-keto reductase AFTS1 catalyzes the conversion of 2-keto-isovaleric acid (2-KIV) to 2-hydroxy-isovaleric acid (2-HIV) by reduction of its ketone to an alcohol. The acyl-CoA ligase AFT1, the hydrolase AFT2 and the enoyl-CoA hydratases AFT3 and AFT6, but also the polyketide synthase AFT9, the acyl-CoA dehydrogenase AFT10, the cytochrome P450 monooxygenase AFT11 and the oxidoreductase AFT12 are all involved in the biosynthesis of the AK-, AF- and ACT-toxin common EDA structural moiety. The exact function of each enzyme, and of additional enzymes identified within the AF-toxin clusters have still to be determined. This chain is Putative epoxide hydrolase AFT8, found in Alternaria alternata (Alternaria rot fungus).